The primary structure comprises 25 residues: Bioremediase (25 aa).

The Alpha-carbonic anhydrase domain maps to 1–25 (DFPIANGERQSPVDIDTKAVVQDPA). The tract at residues 1-25 (DFPIANGERQSPVDIDTKAVVQDPA) is disordered.

It belongs to the alpha-carbonic anhydrase family. Zn(2+) is required as a cofactor.

Its function is as follows. Releases silica from silica-rich substances. This chain is Bioremediase, found in Thermoanaerobacter sp.